Reading from the N-terminus, the 87-residue chain is Small ribosomal subunit protein uS15c (87 aa).

The protein belongs to the universal ribosomal protein uS15 family. Part of the 30S ribosomal subunit.

The protein resides in the plastid. It is found in the chloroplast. This is Small ribosomal subunit protein uS15c (rps15) from Solanum tuberosum (Potato).